A 1793-amino-acid polypeptide reads, in one-letter code: MASSEADSRLSRVVTPALEKIVKNASWRKHSKLANECKAVIERLNSLQKSPPPSSSAATDSESESSVPGPLNDGGSIEYSLADSELIFSPLINACGTGLAKIIEPAIDCIQKLIAHGYIRGESDPSGGAESLLLFKLIDSVCKCHDLGDESIELPVLKTLLSAINSISLRIHGKCLLLVVRTCYDIYLGSKNVVNQTTAKASLIQILVIVFRRMEADSSTVPIQPIVVAELMEPLEKSDADGTMTQFVQGFITKIMQDIDGVLNPTMSGSGSGSGSGGQDGAYGTTTVETTNPTDLLDSTDKDMLDAKYWEISMYKSALEGRKGELTDGDAERDDDLEVQIENKLRRDACLVFRALCKLSMKAPPKESSADPQSMRGKILALELLKILLENAGAVFRTSEKFSADIKQFLCLSLLKNSASTLMIIFQLSCSIFISLVARFRAGLKAEIGVFFPMIVLRVVENVAQPNFQQKMIVLRFLDKLCLDSQILVDIFLNYDCDVNSSNIFERMVNGLLKTAQGVPPGTATTLMPPQEAAMKLEAMKCLVAILKSMGDWLNKQLRLPVSNSLNKSDVIEIDLGPGSPQLANGNADESADGSDTYSESSGGTSDALAIEQRRAYKLELQEGISLFNRKPTKGIEFLINAGKVGESPEEIAGFLKDASGLNKTLIGDYLGEREDLALKVMHAYVDSFDFRGMEFDEAIRTFLEGFRLPGEAQKIDRIMEKFAERYCKCNPKVFTSADSAYVLAYSVIMLNTDAHNPMVKNKMSADDFIRNNRGIDDGKDLPADYMRSLYERITKHEIKMKEDDLRLQQKQYANSNRMLGLDGILNIVIRKQWGDSYAETSDDLMKHMQEQFKEKARKSESTYYAATDVVILRFMIEACWAPMLAAFSVPLDQSDDLIVINICLEGFHHAIHATSLMSMKTHRDAFVTSLAKFTSLHSPADIKQRNIEAIKAILRLADEEGNYLQDAWEHILTCVSRFEQLHLLGEGAPPDATFFASKQNESEKSKQPKQYILPVLKRKGPGKSQYAATGVLRGSYDSMSLGGKGSKNVRQEQMSSIVSNLNLLEQVGEMNQVFSQSQKLNSEAIIDFVKALCKVSMDELRSPSNPRVFSLTKIVEIAHYNMNRIRLVWSSIWQVLSGFFVTIGCSENLSIAIFAMDSLRQLSMKFLEREELANYNFQNEFMTPFVIVMRRSNDVEIRELIIRCVSQMVLSRVNNVKSGWKSMFMVFTTAAYDDHKNIVFLSFEIIEKIIREYFPYITETETTTFTDCVNCLVAFTNNRFSKDISLSSIAFLRYCATKLAEGDLNSPSTNKYKGTSGKIPQSSLHSGKSGKQENGEIVNNNHLYFWFPLLSGLSELSFDPRPEIRKSALQIMFDTLRNHGHLFSLPLWEKVFESVLFPIFDYVRHSIDPSGEDESADQGSSGGEVDELDHDAWLYETCTLALQLVVDLFVKFYTTVNPLLEKVLMLLVSFIKRPHQSLAGIGIAAFVRLMSDADGLFSEEKWLEVVSALKEAAKTTCPDFSYFLSEEYVARSQRSALNIQNSNAESAAPTATDGNEESQRTATHLYAAISDAKCRAAVQLLLIQAVMEIYNMYRPQLSAKNTLVLVDALHGVALHAHGINSNTILRSRLQELGPMTQMQDPPLLRLENESYQICLTFLQNLVADKTKKEEEEEEEEIESLLVNICQEVLNFYIETSSSAKKLQSESSRASEYRWRIPLGSGKRRELSARAPLIVATLQAMCTLDEASFEKNLKCLFPLLANLISCEHGSNEVQTALADMLGLSVGPVLLQWC.

Ala-2 carries the N-acetylalanine modification. Disordered regions lie at residues 45 to 71, 266 to 299, and 579 to 606; these read NSLQKSPPPSSSAATDSESESSVPGPL, TMSGSGSGSGSGGQDGAYGTTTVETTNPTDLLDS, and GSPQLANGNADESADGSDTYSESSGGTS. The segment covering 55-66 has biased composition (low complexity); sequence SSAATDSESESS. The segment covering 270–281 has biased composition (gly residues); the sequence is SGSGSGSGGQDG. 2 stretches are compositionally biased toward polar residues: residues 284–294 and 594–605; these read GTTTVETTNPT and GSDTYSESSGGT. Ser-595 carries the post-translational modification Phosphoserine. The 188-residue stretch at 610 to 797 folds into the SEC7 domain; sequence AIEQRRAYKL…RSLYERITKH (188 aa). Glu-712 is an active-site residue. Polar residues predominate over residues 1311–1327; it reads NKYKGTSGKIPQSSLHS. The tract at residues 1311–1333 is disordered; it reads NKYKGTSGKIPQSSLHSGKSGKQ.

As to quaternary structure, homodimer.

It localises to the cytoplasm. Its subcellular location is the cytosol. It is found in the membrane. Its activity is regulated as follows. Inhibited by brefeldin A. In terms of biological role, activates the ARF proteins by exchanging bound GDP for free GTP. Plays a role in vesicular protein sorting. This is Brefeldin A-inhibited guanine nucleotide-exchange protein 2 (BIG2) from Arabidopsis thaliana (Mouse-ear cress).